We begin with the raw amino-acid sequence, 144 residues long: Cell division protein SepF (144 aa).

The segment at 16-42 is disordered; the sequence is DEMNEAPYTEAEQQEEEVPQAQKNERR.

This sequence belongs to the SepF family. Homodimer. Interacts with FtsZ.

It is found in the cytoplasm. Cell division protein that is part of the divisome complex and is recruited early to the Z-ring. Probably stimulates Z-ring formation, perhaps through the cross-linking of FtsZ protofilaments. Its function overlaps with FtsA. The protein is Cell division protein SepF of Lactobacillus gasseri (strain ATCC 33323 / DSM 20243 / BCRC 14619 / CIP 102991 / JCM 1131 / KCTC 3163 / NCIMB 11718 / NCTC 13722 / AM63).